The sequence spans 158 residues: Protein NrdI (158 aa).

This sequence belongs to the NrdI family.

In terms of biological role, probably involved in ribonucleotide reductase function. The polypeptide is Protein NrdI (Rhodococcus jostii (strain RHA1)).